Consider the following 500-residue polypeptide: Maintenance of mitochondrial morphology protein 1 (500 aa).

The Lumenal portion of the chain corresponds to 1–42 (MATQVATPLSPSYTSELIIVCHHVLQHSPTPLTPHSLSFTQG). The chain crosses the membrane as a helical span at residues 43–63 (FLLGQLSIALLIFFFIKFFIF). Residues 64-500 (GEPPSADDRS…PGALAPGTFR (437 aa)) are Cytoplasmic-facing. In terms of domain architecture, SMP-LTD spans 141-375 (QPESLDWFNV…EPRFQQIVLP (235 aa)). 2 stretches are compositionally biased toward low complexity: residues 283 to 294 (SSSPPSTSTTTP) and 302 to 316 (NSTT…HRPT). Disordered regions lie at residues 283-316 (SSSP…HRPT) and 406-500 (EEEE…GTFR). Residues 406 to 415 (EEEEEEEEDG) are compositionally biased toward acidic residues. The span at 438 to 471 (EGAKLREAEIRAGVRKQERPGMSRAQTSREEGVR) shows a compositional bias: basic and acidic residues.

The protein belongs to the MMM1 family. In terms of assembly, homodimer. Component of the ER-mitochondria encounter structure (ERMES) or MDM complex, composed of MMM1, MDM10, MDM12 and MDM34. An MMM1 homodimer associates with one molecule of MDM12 on each side in a pairwise head-to-tail manner, and the SMP-LTD domains of MMM1 and MDM12 generate a continuous hydrophobic tunnel for phospholipid trafficking.

The protein localises to the endoplasmic reticulum membrane. In terms of biological role, component of the ERMES/MDM complex, which serves as a molecular tether to connect the endoplasmic reticulum (ER) and mitochondria. Components of this complex are involved in the control of mitochondrial shape and protein biogenesis, and function in nonvesicular lipid trafficking between the ER and mitochondria. The MDM12-MMM1 subcomplex functions in the major beta-barrel assembly pathway that is responsible for biogenesis of all outer membrane beta-barrel proteins, and acts in a late step after the SAM complex. The MDM10-MDM12-MMM1 subcomplex further acts in the TOM40-specific pathway after the action of the MDM12-MMM1 complex. Essential for establishing and maintaining the structure of mitochondria and maintenance of mtDNA nucleoids. The chain is Maintenance of mitochondrial morphology protein 1 from Phaeosphaeria nodorum (strain SN15 / ATCC MYA-4574 / FGSC 10173) (Glume blotch fungus).